A 356-amino-acid chain; its full sequence is Anthranilate phosphoribosyltransferase (356 aa).

Residues G96, 99–100, T104, 106–109, 124–132, and S136 contribute to the 5-phospho-alpha-D-ribose 1-diphosphate site; these read GD, NIST, and KHGNRSASG. Residue G96 participates in anthranilate binding. S108 lines the Mg(2+) pocket. N127 is a binding site for anthranilate. R182 serves as a coordination point for anthranilate. Mg(2+)-binding residues include D241 and E242.

It belongs to the anthranilate phosphoribosyltransferase family. As to quaternary structure, homodimer. The cofactor is Mg(2+).

The catalysed reaction is N-(5-phospho-beta-D-ribosyl)anthranilate + diphosphate = 5-phospho-alpha-D-ribose 1-diphosphate + anthranilate. The protein operates within amino-acid biosynthesis; L-tryptophan biosynthesis; L-tryptophan from chorismate: step 2/5. Its function is as follows. Catalyzes the transfer of the phosphoribosyl group of 5-phosphorylribose-1-pyrophosphate (PRPP) to anthranilate to yield N-(5'-phosphoribosyl)-anthranilate (PRA). The sequence is that of Anthranilate phosphoribosyltransferase from Trichodesmium erythraeum (strain IMS101).